The primary structure comprises 291 residues: Lipoyl synthase, organellar chromatophore (291 aa).

The [4Fe-4S] cluster site is built by Cys33, Cys38, Cys44, Cys59, Cys63, Cys66, and Ser274. Residues 45–263 enclose the Radical SAM core domain; that stretch reads FAGGTATFLI…AIGELEMNFL (219 aa).

Belongs to the radical SAM superfamily. Lipoyl synthase family. The cofactor is [4Fe-4S] cluster.

Its subcellular location is the plastid. It localises to the organellar chromatophore. The catalysed reaction is [[Fe-S] cluster scaffold protein carrying a second [4Fe-4S](2+) cluster] + N(6)-octanoyl-L-lysyl-[protein] + 2 oxidized [2Fe-2S]-[ferredoxin] + 2 S-adenosyl-L-methionine + 4 H(+) = [[Fe-S] cluster scaffold protein] + N(6)-[(R)-dihydrolipoyl]-L-lysyl-[protein] + 4 Fe(3+) + 2 hydrogen sulfide + 2 5'-deoxyadenosine + 2 L-methionine + 2 reduced [2Fe-2S]-[ferredoxin]. Its pathway is protein modification; protein lipoylation via endogenous pathway; protein N(6)-(lipoyl)lysine from octanoyl-[acyl-carrier-protein]: step 2/2. Catalyzes the radical-mediated insertion of two sulfur atoms into the C-6 and C-8 positions of the octanoyl moiety bound to the lipoyl domains of lipoate-dependent enzymes, thereby converting the octanoylated domains into lipoylated derivatives. This Paulinella chromatophora protein is Lipoyl synthase, organellar chromatophore.